A 121-amino-acid polypeptide reads, in one-letter code: uncharacterized protein (121 aa).

Disordered regions lie at residues 1–41 and 94–121; these read MRRQ…QESR and GGTI…GLRR. Polar residues predominate over residues 98–108; the sequence is SGQQSRNSSLP.

Predominantly expressed in tissues containing motile cilia. Also expressed in non-motile ciliated adult olfactory bulbs.

It is found in the cytoplasm. Its subcellular location is the cytoskeleton. The protein localises to the cilium basal body. This is an uncharacterized protein from Mus musculus (Mouse).